A 52-amino-acid chain; its full sequence is uncharacterized protein (52 aa).

Positions 1-52 (MVNNDAKIGRREFYDRVESVRPKSPPRERPTYTYSNSRTVDGYSNRGPRADF) are disordered. Over residues 7–30 (KIGRREFYDRVESVRPKSPPRERP) the composition is skewed to basic and acidic residues.

This is an uncharacterized protein from Dictyostelium discoideum (Social amoeba).